Reading from the N-terminus, the 139-residue chain is FAD synthase (139 aa).

ATP-binding positions include 9-10 (TF), 14-17 (HPGH), and asparagine 92.

Belongs to the archaeal FAD synthase family. As to quaternary structure, homodimer. The cofactor is a divalent metal cation.

It catalyses the reaction FMN + ATP + H(+) = FAD + diphosphate. The protein operates within cofactor biosynthesis; FAD biosynthesis; FAD from FMN: step 1/1. Functionally, catalyzes the transfer of the AMP portion of ATP to flavin mononucleotide (FMN) to produce flavin adenine dinucleotide (FAD) coenzyme. This chain is FAD synthase, found in Methanocella paludicola (strain DSM 17711 / JCM 13418 / NBRC 101707 / SANAE).